Reading from the N-terminus, the 1403-residue chain is Baculoviral IAP repeat-containing protein 1f (1403 aa).

BIR repeat units lie at residues 60–127, 159–227, and 278–345; these read EAKR…CEFL, EEAR…CEFL, and EELR…CVFL. Residues Cys315, Cys318, His335, and Cys342 each contribute to the Zn(2+) site. The region spanning 464-759 is the NACHT domain; the sequence is SVMCVEGEAG…EFLAAVRLTE (296 aa). 473 to 478 contacts ATP; that stretch reads GSGKTT.

As to quaternary structure, component of the NLRC4 inflammasome, at least composed of NLRC4, caspase-1 (CASP1) and some NAIP protein. (Microbial infection) Interacts with S.typhimurium (Salmonella) flagellin.

Its function is as follows. Sensor component of the NLRC4 inflammasome that specifically recognizes and binds flagellin from pathogenic bacteria. Association of pathogenic bacteria proteins drives in turn drive assembly and activation of the NLRC4 inflammasome, promoting caspase-1 activation, cytokine production and macrophage pyroptosis. The NLRC4 inflammasome is activated as part of the innate immune response to a range of intracellular bacteria. The NLRC4 inflammasome senses Gram-negative bacteria such as L.pneumophila and P.aeruginosa, enteric pathogens S.typhimurium (Salmonella) and S.flexneri. May contribute to prevent motor-neuron apoptosis induced by a variety of signals. In Mus musculus (Mouse), this protein is Baculoviral IAP repeat-containing protein 1f (Naip6).